The chain runs to 407 residues: Cathepsin D (407 aa).

A signal peptide spans 1–20; sequence MQTPGVLLLILGLLDASSSA. A propeptide spans 21 to 64 (activation peptide); sequence LIRIPLRKFTSIRRTMTEVGGSVEDLILKGPITKYSMQSSPRTK. Residues 79–402 form the Peptidase A1 domain; it reads YYGEIGIGTP…DREYNRVGFA (324 aa). Disulfide bonds link cysteine 91-cysteine 160 and cysteine 110-cysteine 117. Aspartate 97 is an active-site residue. Residues asparagine 134 and asparagine 258 are each glycosylated (N-linked (GlcNAc...) asparagine). A disulfide bridge connects residues cysteine 281 and cysteine 285. Residue aspartate 290 is part of the active site. Cysteine 324 and cysteine 361 are oxidised to a cystine.

Belongs to the peptidase A1 family. As to quaternary structure, occurs as a mixture of both a single chain form and two types of two chain (light and heavy) forms. Interacts with ADAM30; this leads to activation of CTSD. Post-translationally, N- and O-glycosylated. In terms of processing, undergoes proteolytic cleavage and activation by ADAM30.

It localises to the lysosome. It is found in the melanosome. The protein resides in the secreted. The protein localises to the extracellular space. It carries out the reaction Specificity similar to, but narrower than, that of pepsin A. Does not cleave the 4-Gln-|-His-5 bond in B chain of insulin.. Acid protease active in intracellular protein breakdown. Plays a role in APP processing following cleavage and activation by ADAM30 which leads to APP degradation. This chain is Cathepsin D (Ctsd), found in Rattus norvegicus (Rat).